Reading from the N-terminus, the 847-residue chain is Leucine--tRNA ligase (847 aa).

Residues Pro41 to His51 carry the 'HIGH' region motif. Positions Lys619–Ser623 match the 'KMSKS' region motif. Position 622 (Lys622) interacts with ATP.

It belongs to the class-I aminoacyl-tRNA synthetase family.

It localises to the cytoplasm. The enzyme catalyses tRNA(Leu) + L-leucine + ATP = L-leucyl-tRNA(Leu) + AMP + diphosphate. In Cereibacter sphaeroides (strain KD131 / KCTC 12085) (Rhodobacter sphaeroides), this protein is Leucine--tRNA ligase.